Here is a 357-residue protein sequence, read N- to C-terminus: Anthranilate phosphoribosyltransferase (357 aa).

5-phospho-alpha-D-ribose 1-diphosphate is bound by residues Gly94, 97-98 (GD), Thr102, 104-107 (NLST), 122-130 (KHGNRAASS), and Gly134. Gly94 serves as a coordination point for anthranilate. Ser106 contributes to the Mg(2+) binding site. Asn125 lines the anthranilate pocket. Arg180 is a binding site for anthranilate. Residues Asp238 and Glu239 each contribute to the Mg(2+) site.

It belongs to the anthranilate phosphoribosyltransferase family. Homodimer. The cofactor is Mg(2+).

It catalyses the reaction N-(5-phospho-beta-D-ribosyl)anthranilate + diphosphate = 5-phospho-alpha-D-ribose 1-diphosphate + anthranilate. Its pathway is amino-acid biosynthesis; L-tryptophan biosynthesis; L-tryptophan from chorismate: step 2/5. Catalyzes the transfer of the phosphoribosyl group of 5-phosphorylribose-1-pyrophosphate (PRPP) to anthranilate to yield N-(5'-phosphoribosyl)-anthranilate (PRA). In Mycobacterium sp. (strain KMS), this protein is Anthranilate phosphoribosyltransferase.